The sequence spans 118 residues: Thioredoxin-like protein CXXS1 (118 aa).

The Thioredoxin domain maps to 2–110; it reads ARVVKIDSAE…IKKRVDGFVQ (109 aa).

This sequence belongs to the thioredoxin family. Ubiquitous.

Its subcellular location is the cytoplasm. Possesses low disulfide reductase activity, but efficient protein disulfide isomerase activity. Does not possess deglutathionylation activity. This is Thioredoxin-like protein CXXS1 (CXXS1) from Arabidopsis thaliana (Mouse-ear cress).